Here is a 228-residue protein sequence, read N- to C-terminus: Sliding clamp (228 aa).

This sequence belongs to the Tevenvirinae sliding clamp family. Homotrimer. Interacts with the viral DNA polymerase; this interaction constitutes the polymerase holoenzyme. Interacts with the sliding-clamp-loader; this interaction allows the sliding-clamp-loader to open the sliding clamp. Interacts with the viral DNA ligase. Part of the replicase complex that includes the DNA polymerase, the polymerase clamp, the clamp loader complex, the single-stranded DNA binding protein, the primase, the helicase and the helicase assembly factor. Interacts with the viral RNA polymerase (RNAP). Part of the transcription activation complex containing host RNAP, the viral RNA polymerase sigma-like factor, the late transcription coactivator, and the sliding clamp.

Functionally, sliding clamp that encircles the genomic DNA and links the DNA polymerase to the template to control the processivity of DNA synthesis. Responsible for tethering the catalytic subunit of DNA polymerase to DNA during high-speed replication. Interaction with the sliding-clamp-loader opens the sliding clamp so that it can be loaded around the DNA template. During transcription, encircles the DNA and tethers host RNA polymerase (RNAP) to it. The protein is Sliding clamp (45) of Escherichia coli (Bacteriophage RB69).